The primary structure comprises 248 residues: Cytochrome c oxidase subunit 2 (248 aa).

The first 12 residues, 1–12 (MLLMNLFTIINN), serve as a signal peptide directing secretion. At 13 to 39 (DVPTPYNMYFQDSTTPHQEGILELHDN) the chain is on the mitochondrial intermembrane side. The chain crosses the membrane as a helical span at residues 40–61 (IMFYMLTVLGLVSWMMIIIIKD). Residues 62–79 (YKNNPITYKYIKHGQMIE) lie on the Mitochondrial matrix side of the membrane. A helical membrane pass occupies residues 80–104 (IIWTILPAIILLMIAFPSFILLYLC). At 105-248 (DEVISPAMTI…PTFLTWLNEQ (144 aa)) the chain is on the mitochondrial intermembrane side. Positions 183, 218, 220, 222, 226, and 229 each coordinate Cu cation. Glu-220 is a binding site for Mg(2+).

Belongs to the cytochrome c oxidase subunit 2 family. As to quaternary structure, component of the cytochrome c oxidase (complex IV, CIV), a multisubunit enzyme composed of a catalytic core of 3 subunits and several supernumerary subunits. The complex exists as a monomer or a dimer and forms supercomplexes (SCs) in the inner mitochondrial membrane with ubiquinol-cytochrome c oxidoreductase (cytochrome b-c1 complex, complex III, CIII). Requires Cu cation as cofactor. Post-translationally, the signal sequence of COX2 is processed by IMP1.

It is found in the mitochondrion inner membrane. It catalyses the reaction 4 Fe(II)-[cytochrome c] + O2 + 8 H(+)(in) = 4 Fe(III)-[cytochrome c] + 2 H2O + 4 H(+)(out). Functionally, component of the cytochrome c oxidase, the last enzyme in the mitochondrial electron transport chain which drives oxidative phosphorylation. The respiratory chain contains 3 multisubunit complexes succinate dehydrogenase (complex II, CII), ubiquinol-cytochrome c oxidoreductase (cytochrome b-c1 complex, complex III, CIII) and cytochrome c oxidase (complex IV, CIV), that cooperate to transfer electrons derived from NADH and succinate to molecular oxygen, creating an electrochemical gradient over the inner membrane that drives transmembrane transport and the ATP synthase. Cytochrome c oxidase is the component of the respiratory chain that catalyzes the reduction of oxygen to water. Electrons originating from reduced cytochrome c in the intermembrane space (IMS) are transferred via the dinuclear copper A center (CU(A)) of subunit 2 and heme A of subunit 1 to the active site in subunit 1, a binuclear center (BNC) formed by heme A3 and copper B (CU(B)). The BNC reduces molecular oxygen to 2 water molecules using 4 electrons from cytochrome c in the IMS and 4 protons from the mitochondrial matrix. In Eremothecium gossypii (strain ATCC 10895 / CBS 109.51 / FGSC 9923 / NRRL Y-1056) (Yeast), this protein is Cytochrome c oxidase subunit 2 (COX2).